A 1415-amino-acid polypeptide reads, in one-letter code: Non-structural polyprotein 1AB (1415 aa).

Residues 104–142 (KLIHKANALQERLRLSQEEKATLALDVQFLQHENVRLKE) are a coiled coil. 5 helical membrane-spanning segments follow: residues 154 to 174 (MKWIIVGAVLTFLSLIPGGYA), 239 to 259 (VFYYIHYYEMWNIFMFVLAIG), 286 to 306 (VLPTIPFHTTMTLWVMNTLMV), 313 to 333 (LLAITLAILAPILGIIFLCFM), and 344 to 364 (GLIATAVLIAGGHACLTLTGT). Catalysis depends on charge relay system; for serine protease activity residues His461, Asp489, and Ser551. Residues 587–616 (VKAPSRVELLKEEIERLKAQLNSAAENPAT) adopt a coiled-coil conformation. Position 693 is an O-(5'-phospho-RNA)-tyrosine (Tyr693). The segment at 753 to 813 (FDQAKPTPAP…KNEPQPYSQT (61 aa)) is disordered. The segment covering 783–795 (SQKKEKQLEHEQQ) has biased composition (basic and acidic residues). Polar residues predominate over residues 800-813 (TKPQKNEPQPYSQT). Residues 1160-1286 (KHFIEFDWTR…TTPSVPDDYE (127 aa)) form the RdRp catalytic domain.

This sequence belongs to the astroviridae polyprotein 1AB family. Monomer. Cleaved by the viral and host proteases. The protease is probably autocatalytically cleaved.

It localises to the host membrane. It catalyses the reaction RNA(n) + a ribonucleoside 5'-triphosphate = RNA(n+1) + diphosphate. In terms of biological role, responsible for the cleavage of the polyprotein into functional products. Functionally, covalently attached to the 5' extremity of the genomic and subgenomic RNAs. It may serve as a primer for the replicase. The polypeptide is Non-structural polyprotein 1AB (ORF1) (Human astrovirus-4 (HAstV-4)).